We begin with the raw amino-acid sequence, 120 residues long: MAKYRAGRINEEVKKEVSNIIHNDIKDPRLSAMVSVTDVNVTKDLKYAKVYVSIFGNEKAKEESLEALKSSVGFIRKEVGRRVKLRNTPEVIIEVDNSIERGMHIDELLHSIKENESNDN.

Belongs to the RbfA family. Monomer. Binds 30S ribosomal subunits, but not 50S ribosomal subunits or 70S ribosomes.

Its subcellular location is the cytoplasm. One of several proteins that assist in the late maturation steps of the functional core of the 30S ribosomal subunit. Associates with free 30S ribosomal subunits (but not with 30S subunits that are part of 70S ribosomes or polysomes). Required for efficient processing of 16S rRNA. May interact with the 5'-terminal helix region of 16S rRNA. The sequence is that of Ribosome-binding factor A from Clostridium botulinum (strain ATCC 19397 / Type A).